A 216-amino-acid polypeptide reads, in one-letter code: 4-hydroxy-tetrahydrodipicolinate reductase (216 aa).

NAD(+) contacts are provided by residues 7–12 (GYSGRM), 71–73 (GTT), and 95–98 (AYNF). The Proton donor/acceptor role is filled by histidine 127. Histidine 128 is a (S)-2,3,4,5-tetrahydrodipicolinate binding site. The active-site Proton donor is the lysine 131. 137-138 (GT) lines the (S)-2,3,4,5-tetrahydrodipicolinate pocket.

The protein belongs to the DapB family.

The protein localises to the cytoplasm. It catalyses the reaction (S)-2,3,4,5-tetrahydrodipicolinate + NAD(+) + H2O = (2S,4S)-4-hydroxy-2,3,4,5-tetrahydrodipicolinate + NADH + H(+). The catalysed reaction is (S)-2,3,4,5-tetrahydrodipicolinate + NADP(+) + H2O = (2S,4S)-4-hydroxy-2,3,4,5-tetrahydrodipicolinate + NADPH + H(+). It participates in amino-acid biosynthesis; L-lysine biosynthesis via DAP pathway; (S)-tetrahydrodipicolinate from L-aspartate: step 4/4. Functionally, catalyzes the conversion of 4-hydroxy-tetrahydrodipicolinate (HTPA) to tetrahydrodipicolinate. In Thermotoga sp. (strain RQ2), this protein is 4-hydroxy-tetrahydrodipicolinate reductase.